The following is a 364-amino-acid chain: tRNA 2-selenouridine synthase (364 aa).

Residues F12–E135 enclose the Rhodanese domain. C95 serves as the catalytic S-selanylcysteine intermediate.

The protein belongs to the SelU family. In terms of assembly, monomer.

The enzyme catalyses 5-methylaminomethyl-2-thiouridine(34) in tRNA + selenophosphate + (2E)-geranyl diphosphate + H2O + H(+) = 5-methylaminomethyl-2-selenouridine(34) in tRNA + (2E)-thiogeraniol + phosphate + diphosphate. The catalysed reaction is 5-methylaminomethyl-2-thiouridine(34) in tRNA + (2E)-geranyl diphosphate = 5-methylaminomethyl-S-(2E)-geranyl-thiouridine(34) in tRNA + diphosphate. It carries out the reaction 5-methylaminomethyl-S-(2E)-geranyl-thiouridine(34) in tRNA + selenophosphate + H(+) = 5-methylaminomethyl-2-(Se-phospho)selenouridine(34) in tRNA + (2E)-thiogeraniol. It catalyses the reaction 5-methylaminomethyl-2-(Se-phospho)selenouridine(34) in tRNA + H2O = 5-methylaminomethyl-2-selenouridine(34) in tRNA + phosphate. In terms of biological role, involved in the post-transcriptional modification of the uridine at the wobble position (U34) of tRNA(Lys), tRNA(Glu) and tRNA(Gln). Catalyzes the conversion of 2-thiouridine (S2U-RNA) to 2-selenouridine (Se2U-RNA). Acts in a two-step process involving geranylation of 2-thiouridine (S2U) to S-geranyl-2-thiouridine (geS2U) and subsequent selenation of the latter derivative to 2-selenouridine (Se2U) in the tRNA chain. The chain is tRNA 2-selenouridine synthase from Pseudomonas fluorescens (strain ATCC BAA-477 / NRRL B-23932 / Pf-5).